The primary structure comprises 473 residues: H(+)/Cl(-) exchange transporter ClcA (473 aa).

Residues 1-32 (MKTDTPSLEIPQAARLRRRQLIRQLLERDKTP) are Cytoplasmic-facing. A helical membrane pass occupies residues 33-69 (LAILFMAAVVGTLVGLAAVAFDKGVSWLQNQRMGALV). Residues 70–76 (HTADNYP) lie on the Periplasmic side of the membrane. Residues 77–100 (LLLTVAFLCSAVLAMFGYFLVRKY) traverse the membrane as a helical segment. Positions 106-110 (GSGIP) match the Selectivity filter part_1 motif. Serine 107 contributes to the chloride binding site. An intramembrane region (helical) is located at residues 109–116 (IPEIEGAL). At 117 to 123 (EDQRPVR) the chain is on the cytoplasmic side. Transmembrane regions (helical) follow at residues 124–141 (WWRV…TLGG) and 148–166 (EGPT…LDIF). A Selectivity filter part_2 motif is present at residues 146-150 (GREGP). The Cytoplasmic segment spans residues 167-176 (RLKGDEARHT). 2 consecutive intramembrane regions (helical) follow at residues 177 to 189 (LLAT…LAAA) and 193 to 201 (PLAGILFII). The Cytoplasmic segment spans residues 202–214 (EEMRPQFRYTLIS). Residues 215–232 (IKAVFIGVIMSTIMYRIF) traverse the membrane as a helical segment. The Periplasmic portion of the chain corresponds to 233 to 252 (NHEVALIDVGKLSDAPLNTL). Residues 253 to 281 (WLYLILGIIFGIFGPIFNKWVLGMQDLLH) traverse the membrane as a helical segment. Over 282–287 (RVHGGN) the chain is Cytoplasmic. A helical membrane pass occupies residues 288–309 (ITKWVIMGGAIGGLCGLLGFVA). At 310-329 (PATSGGGFNLIPIATAGNFS) the chain is on the periplasmic side. A run of 2 helical transmembrane segments spans residues 330–349 (MGML…LCFS) and 355–376 (GIFA…MVAV). The Selectivity filter part_3 motif lies at 355-359 (GIFAP). Residues isoleucine 356 and phenylalanine 357 each contribute to the chloride site. The Periplasmic segment spans residues 377 to 386 (ELFPQYHLEA). Residues 387–401 (GTFAIAGMGALLAAS) constitute an intramembrane region (helical). The note=Loop between two helices intramembrane region spans 402 to 404 (IRA). Positions 405–416 (PLTGIILVLEMT) form an intramembrane region, helical. The segment at residues 417-421 (DNYQL) is an intramembrane region (note=Loop between two helices). Residues 422–438 (ILPMIITGLGATLLAQF) form a helical membrane-spanning segment. The Cytoplasmic portion of the chain corresponds to 439–473 (TGGKPLYSAILARTLAKQEAEQLARSKAASASENT). Tyrosine 445 is a chloride binding site.

This sequence belongs to the chloride channel (TC 2.A.49) family. ClcA subfamily. Homodimer.

The protein resides in the cell inner membrane. The catalysed reaction is 2 chloride(in) + H(+)(out) = 2 chloride(out) + H(+)(in). Functionally, proton-coupled chloride transporter. Functions as antiport system and exchanges two chloride ions for 1 proton. Probably acts as an electrical shunt for an outwardly-directed proton pump that is linked to amino acid decarboxylation, as part of the extreme acid resistance (XAR) response. In Escherichia fergusonii (strain ATCC 35469 / DSM 13698 / CCUG 18766 / IAM 14443 / JCM 21226 / LMG 7866 / NBRC 102419 / NCTC 12128 / CDC 0568-73), this protein is H(+)/Cl(-) exchange transporter ClcA.